Here is a 413-residue protein sequence, read N- to C-terminus: MVSAKDILSDSLRSSVLIIKHKDKLSPDYVPENLPHREEKIKELGFIFKDLLAGDAKDSERVVILGRTGTGKTATVRLFGKNFEDIAEREYGVKVKYVHINCYRHRTLYLISQEIANALKLPIPSRGLSAQEVFKMIHEYLDRRNIHLIVALDEFGHFLNTANTEEIYFLVRLYDEISAIIKRISYIFIVNESHSIYKLDRSIRDHIARRLIEFPPYKSMELYDILKYRVDEAFNDNAVDDEVLQFISNTYGYDKGGNGNARIAIETLSLAGEIAEKEGSPVVLLDHAKKANSTINPEIQEIIDSLSYLDLHQLILLKALIRALNKTKADEITMGTLEEEYISLSREFNEEPRRHTQVYEYLRKLKVIGIINTRQSGKGMRGRTTLVSLSLPLDKRLDDYIMQQIMVRLKSRA.

Residues 70-74 (TGKTA), Tyr217, and Arg229 each bind ATP.

Belongs to the CDC6/cdc18 family. As to quaternary structure, monomer. Interacts with Cdc6-3, MCM and PolB1. Post-translationally, autophosphorylated in vitro.

Functionally, involved in regulation of DNA replication. May play essential roles in origin recognition and cell cycle control of replication. Binds both single-stranded and double-stranded DNA, with a preference for molecules that contain a bubble, a fork, or a tail. Has a weak ATPase activity. Stimulates the binding of the MCM helicase to the origin DNA, but strongly inhibits ATPase and DNA helicase activities of MCM. Also regulates the DNA polymerase and the nuclease activities of PolB1. The sequence is that of ORC1-type DNA replication protein 2 (cdc6-2) from Saccharolobus solfataricus (strain ATCC 35092 / DSM 1617 / JCM 11322 / P2) (Sulfolobus solfataricus).